A 715-amino-acid chain; its full sequence is ABC transporter F family member 3 (715 aa).

Thr2 carries the post-translational modification N-acetylthreonine. Positions Val96–Pro118 are disordered. 2 ABC transporter domains span residues Ile175–Gln436 and Ile504–Ser713. ATP contacts are provided by residues Gly207–Thr214 and Gly537–Ser544.

The protein belongs to the ABC transporter superfamily. ABCF family. EF3 (TC 3.A.1.121) subfamily.

This Arabidopsis thaliana (Mouse-ear cress) protein is ABC transporter F family member 3 (ABCF3).